Consider the following 345-residue polypeptide: N-acetyl-gamma-glutamyl-phosphate reductase (345 aa).

Cysteine 149 is a catalytic residue.

Belongs to the NAGSA dehydrogenase family. Type 1 subfamily.

Its subcellular location is the cytoplasm. It catalyses the reaction N-acetyl-L-glutamate 5-semialdehyde + phosphate + NADP(+) = N-acetyl-L-glutamyl 5-phosphate + NADPH + H(+). The protein operates within amino-acid biosynthesis; L-arginine biosynthesis; N(2)-acetyl-L-ornithine from L-glutamate: step 3/4. In terms of biological role, catalyzes the NADPH-dependent reduction of N-acetyl-5-glutamyl phosphate to yield N-acetyl-L-glutamate 5-semialdehyde. The sequence is that of N-acetyl-gamma-glutamyl-phosphate reductase from Bacillus anthracis.